A 341-amino-acid chain; its full sequence is S-adenosylmethionine:tRNA ribosyltransferase-isomerase (341 aa).

The protein belongs to the QueA family. In terms of assembly, monomer.

Its subcellular location is the cytoplasm. It catalyses the reaction 7-aminomethyl-7-carbaguanosine(34) in tRNA + S-adenosyl-L-methionine = epoxyqueuosine(34) in tRNA + adenine + L-methionine + 2 H(+). It functions in the pathway tRNA modification; tRNA-queuosine biosynthesis. Functionally, transfers and isomerizes the ribose moiety from AdoMet to the 7-aminomethyl group of 7-deazaguanine (preQ1-tRNA) to give epoxyqueuosine (oQ-tRNA). This Clostridium tetani (strain Massachusetts / E88) protein is S-adenosylmethionine:tRNA ribosyltransferase-isomerase.